A 291-amino-acid polypeptide reads, in one-letter code: Nucleotide-binding protein LMHCC_0126 (291 aa).

13–20 is a binding site for ATP; it reads GMSGAGKT. Position 63–66 (63–66) interacts with GTP; sequence DLRG.

The protein belongs to the RapZ-like family.

Displays ATPase and GTPase activities. This Listeria monocytogenes serotype 4a (strain HCC23) protein is Nucleotide-binding protein LMHCC_0126.